We begin with the raw amino-acid sequence, 565 residues long: Transmembrane 7 superfamily member 3 (565 aa).

The signal sequence occupies residues 1 to 21 (MWRLRLLVLAVLAAGSAEAQA). 4 N-linked (GlcNAc...) asparagine glycosylation sites follow: Asn-22, Asn-56, Asn-70, and Asn-259. 7 consecutive transmembrane segments (helical) span residues 287 to 307 (VSTKVFSTLFALLGLFTCFFG), 311 to 331 (WKTELFFVGFIFLGFFFYILI), 341 to 361 (VRLVLTAVAGSIGGLLLVASW), 364 to 384 (FGILTLCMLCVGLVLGFLVSS), 402 to 422 (VFWVTFSCIALLVPVIFLGCL), 427 to 447 (ILACGIVGSYSVVLAINSYMF), and 478 to 498 (NDYIILAVWGMLAVTGITLQI).

The protein resides in the cell membrane. In terms of biological role, involved in the inhibition of cytokine-induced death of pancreatic beta cells. Involved in the promotion of insulin secretion from pancreatic beta cells. Is a downstream transcriptional target of p53/TP53, and acts as a pro-survival homeostatic factor that attenuates the development of cellular stress. Maintains protein homeostasis and promotes cell survival through attenuation of endoplasmic reticulum (ER) stress and the subsequent induction of unfolded protein response (UPR). This Rattus norvegicus (Rat) protein is Transmembrane 7 superfamily member 3 (Tm7sf3).